Here is a 292-residue protein sequence, read N- to C-terminus: Retinal homeobox protein Rx3 (292 aa).

The interval methionine 1–serine 27 is disordered. The short motif at histidine 32–glycine 39 is the Octapeptide motif element. 2 disordered regions span residues glycine 53–lysine 72 and serine 85–arginine 107. Basic and acidic residues-rich tracts occupy residues threonine 57–lysine 72 and aspartate 92–proline 102. Residues histidine 106–glutamate 165 constitute a DNA-binding region (homeobox). Residues threonine 272–isoleucine 285 carry the OAR motif. Positions arginine 278 to lysine 282 match the Nuclear localization signal motif.

Belongs to the paired homeobox family. Bicoid subfamily.

It localises to the nucleus. In terms of biological role, plays a critical role in eye formation by regulating the initial specification of retinal cells and/or their subsequent proliferation. The chain is Retinal homeobox protein Rx3 (rx3) from Danio rerio (Zebrafish).